Here is a 370-residue protein sequence, read N- to C-terminus: Acyl-CoA:lysophosphatidylglycerol acyltransferase 1 (370 aa).

A helical membrane pass occupies residues Phe-22 to Ile-42. The short motif at His-101 to Asp-106 is the HXXXXD motif element. A helical transmembrane segment spans residues Met-342 to Ile-362.

It belongs to the 1-acyl-sn-glycerol-3-phosphate acyltransferase family. As to expression, ubiquitous. Expressed in heart, kidney, liver, skin, intestine, and thymus. Highest expression is detected in brain and testis.

The protein localises to the endoplasmic reticulum membrane. It carries out the reaction a 2-acyl-sn-glycero-3-phosphoethanolamine + octadecanoyl-CoA = 1-octadecanoyl-2-acyl-sn-glycero-3-phosphoethanolamine + CoA. It catalyses the reaction 2-(9Z-octadecenoyl)-sn-glycero-3-phosphoethanolamine + octadecanoyl-CoA = 1-octadecanoyl-2-(9Z-octadecenoyl)-sn-glycero-3-phosphoethanolamine + CoA. The catalysed reaction is a 2-acyl-sn-glycero-3-phosphoethanolamine + hexadecanoyl-CoA = 1-hexadecanoyl-2-acyl-sn-glycero-3-phosphoethanolamine + CoA. The enzyme catalyses 2-(9Z-octadecenoyl)-sn-glycero-3-phosphoethanolamine + hexadecanoyl-CoA = 1-hexadecanoyl-2-(9Z-octadecenoyl)-sn-glycero-3-phosphoethanolamine + CoA. It carries out the reaction 1-tetradecanoyl-sn-glycero-3-phospho-(1'-sn-glycerol) + hexadecanoyl-CoA = 1-tetradecanoyl-2-hexadecanoyl-sn-glycero-3-phospho-(1'-sn-glycerol) + CoA. It catalyses the reaction 1-hexadecanoyl-sn-glycero-3-phospho-(1'-sn-glycerol) + dodecanoyl-CoA = 1-hexadecanoyl-2-dodecanoyl-sn-glycero-3-phospho-(1'-sn-glycerol) + CoA. The catalysed reaction is 1-hexadecanoyl-sn-glycero-3-phospho-(1'-sn-glycerol) + hexadecanoyl-CoA = 1,2-dihexadecanoyl-sn-glycero-3-phospho-(1'-sn-glycerol) + CoA. The enzyme catalyses 1-hexadecanoyl-sn-glycero-3-phospho-(1'-sn-glycerol) + octadecanoyl-CoA = 1-hexadecanoyl-2-octadecanoyl-sn-glycero-3-phospho-(1'-sn-glycerol) + CoA. It carries out the reaction 1-octadecanoyl-sn-glycero-3-phospho-(1'-sn-glycerol) + hexadecanoyl-CoA = 1-octadecanoyl-2-hexadecanoyl-sn-glycero-3-phospho-(1'-sn-glycerol) + CoA. It catalyses the reaction 1-(9Z-octadecenoyl)-sn-glycero-3-phospho-(1'-sn-glycerol) + dodecanoyl-CoA = 1-(9Z-octadecenoyl)-2-dodecanoyl-sn-glycero-3-phospho-(1'-sn-glycerol) + CoA. The catalysed reaction is 1-hexadecanoyl-sn-glycero-3-phospho-(1'-sn-glycerol) + (9Z)-octadecenoyl-CoA = 1-hexadecanoyl-2-(9Z-octadecenoyl)-sn-glycero-3-phospho-(1'-sn-glycerol) + CoA. The enzyme catalyses 1-(9Z-octadecenoyl)-sn-glycero-3-phospho-(1'-sn-glycerol) + hexadecanoyl-CoA = 1-(9Z-octadecenoyl)-2-hexadecanoyl-sn-glycero-3-phospho-(1'-sn-glycerol) + CoA. It carries out the reaction 1-(9Z-octadecenoyl)-sn-glycero-3-phospho-(1'-sn-glycerol) + (9Z)-octadecenoyl-CoA = 1,2-di-(9Z-octadecenoyl)-sn-glycero-3-phospho-(1'-sn-glycerol) + CoA. It catalyses the reaction a 2-acylglycerol + an acyl-CoA = a 1,2-diacylglycerol + CoA. The catalysed reaction is a 2-acylglycerol + hexadecanoyl-CoA = a 1-hexadecanoyl-2-acylglycerol + CoA. The enzyme catalyses a 1-acylglycerol + hexadecanoyl-CoA = an hexadecanoyl-acylglycerol + CoA. It carries out the reaction a 2-acyl-sn-glycero-3-phosphocholine + an acyl-CoA = a 1,2-diacyl-sn-glycero-3-phosphocholine + CoA. It catalyses the reaction 2-(9Z-octadecenoyl)-sn-glycero-3-phosphocholine + octadecanoyl-CoA = 1-octadecanoyl-2-(9Z-octadecenoyl)-sn-glycero-3-phosphocholine + CoA. The catalysed reaction is 2-(9Z,12Z-octadecadienoyl)-sn-glycero-3-phosphocholine + octadecanoyl-CoA = 1-octadecanoyl-2-(9Z,12Z)-octadecadienoyl-sn-glycero-3-phosphocholine + CoA. The enzyme catalyses 2-(5Z,8Z,11Z,14Z)-eicosatetraenoyl-sn-glycero-3-phosphocholine + octadecanoyl-CoA = 1-octadecanoyl-2-(5Z,8Z,11Z,14Z-eicosatetraenoyl)-sn-glycero-3-phosphocholine + CoA. It carries out the reaction 2-(9Z-octadecenoyl)-sn-glycero-3-phosphocholine + hexadecanoyl-CoA = 1-hexadecanoyl-2-(9Z-octadecenoyl)-sn-glycero-3-phosphocholine + CoA. It catalyses the reaction 2-(9Z-octadecenoyl)-sn-glycero-3-phospho-L-serine + hexadecanoyl-CoA = 1-hexadecanoyl-2-(9Z-octadecenoyl)-sn-glycero-3-phospho-L-serine + CoA. The catalysed reaction is 2-(4Z,7Z,10Z,13Z,16Z,19Z-docosahexaenoyl)-sn-glycero-3-phosphocholine + octadecanoyl-CoA = 1-octadecanoyl-2-(4Z,7Z,10Z,13Z,16Z,19Z-docosahexaenoyl)-sn-glycero-3-phosphocholine + CoA. The enzyme catalyses 1-(9Z-octadecenoyl)-sn-glycero-3-phospho-L-serine + octadecanoyl-CoA = 1-(9Z-octadecenoyl)-2-octadecanoyl-sn-glycero-3-phospho-L-serine + CoA. It carries out the reaction a 2-acyl-sn-glycero-3-phosphoethanolamine + a fatty acyl-CoA = a 1,2-diacyl-sn-glycero-3-phosphoethanolamine + CoA. Its function is as follows. Lysophospholipid acyltransferase involved in fatty acyl chain remodeling of glycerophospholipids in the endoplasmic reticulum membrane. Selectively catalyzes the transfer and esterification of saturated long-chain fatty acids from acyl-CoA to the sn-1 position of 1-lyso-2-acyl phosphatidylethanolamines (1-lyso-PE, LPE), with a preference for stearoyl CoA over palmitoyl CoA as acyl donor. Acts in concert with an unknown phospholipase A1 to convert palmitate PE species into stearate ones. Provides substrates to the PE methylation pathway, controlling stearate/palmitate composition of PE and phosphatidylcholine (PC) species with an overall impact on de novo hepatic lipid synthesis, body fat content and life span. Can acylate lysophosphatidylglycerols (LPG) using various saturated fatty acyl-CoAs as acyl donors. Can also acylate monoacylglycerols with a preference for 2-monoacylglycerols over 1-monoacylglycerols. Has no activity toward lysophosphatidic acids (LPA) and lysophosphatidylcholines (LPC). In Mus musculus (Mouse), this protein is Acyl-CoA:lysophosphatidylglycerol acyltransferase 1.